A 287-amino-acid chain; its full sequence is Merozoite surface protein 2 (287 aa).

The first 20 residues, 1-20 (MKVIKTLSIINFFIFVTFNI), serve as a signal peptide directing secretion. 2 N-linked (GlcNAc...) asparagine glycosylation sites follow: asparagine 22 and asparagine 36. The segment at 42-248 (SMTESNPPTG…DSQKECTDGN (207 aa)) is disordered. Positions 44–213 (TESNPPTGAS…EQTESPELQS (170 aa)) are polymorphic region. Residues 54-112 (GSAGGSAGGSAGGSAGGSAGGSAGGSAGGSAGGSAGGSAGGSAGGSAGGSAGSGDGNGA) show a composition bias toward gly residues. Tandem repeats lie at residues 55–58 (SAGG), 59–62 (SAGG), 63–66 (SAGG), 67–70 (SAGG), 71–74 (SAGG), 75–78 (SAGG), 79–82 (SAGG), 83–86 (SAGG), 87–90 (SAGG), 91–94 (SAGG), 95–98 (SAGG), and 99–102 (SAGG). The interval 55 to 102 (SAGGSAGGSAGGSAGGSAGGSAGGSAGGSAGGSAGGSAGGSAGGSAGG) is 12 X 4 AA tandem repeats of S-A-G-G. The span at 121–149 (SPSTPATTTTTTTTNDAEASTSTSSENPN) shows a compositional bias: low complexity. 2 stretches are compositionally biased toward polar residues: residues 150 to 180 (HNNA…NVPP) and 187 to 215 (KSPT…QSAP). N-linked (GlcNAc...) asparagine glycosylation is present at asparagine 164. Asparagine 236 carries an N-linked (GlcNAc...) asparagine glycan. The cysteines at positions 244 and 252 are disulfide-linked. N-linked (GlcNAc...) asparagine glycans are attached at residues asparagine 260 and asparagine 261. The GPI-anchor amidated asparagine moiety is linked to residue asparagine 261. Residues 262–287 (SSNIASINKFVVLISATLVLSFAIFI) constitute a propeptide, removed in mature form.

The protein resides in the cell membrane. In terms of biological role, may play a role in the merozoite attachment to the erythrocyte. The sequence is that of Merozoite surface protein 2 from Plasmodium falciparum (isolate FCR-3 / Gambia).